A 204-amino-acid polypeptide reads, in one-letter code: FMN-dependent NADH:quinone oxidoreductase 5 (204 aa).

Ser-10 serves as a coordination point for FMN.

The protein belongs to the azoreductase type 1 family. In terms of assembly, homodimer. The cofactor is FMN.

The enzyme catalyses 2 a quinone + NADH + H(+) = 2 a 1,4-benzosemiquinone + NAD(+). It carries out the reaction N,N-dimethyl-1,4-phenylenediamine + anthranilate + 2 NAD(+) = 2-(4-dimethylaminophenyl)diazenylbenzoate + 2 NADH + 2 H(+). In terms of biological role, quinone reductase that provides resistance to thiol-specific stress caused by electrophilic quinones. Also exhibits azoreductase activity. Catalyzes the reductive cleavage of the azo bond in aromatic azo compounds to the corresponding amines. The sequence is that of FMN-dependent NADH:quinone oxidoreductase 5 from Burkholderia lata (strain ATCC 17760 / DSM 23089 / LMG 22485 / NCIMB 9086 / R18194 / 383).